We begin with the raw amino-acid sequence, 341 residues long: D-aspartate oxidase (341 aa).

Asp36, Arg37, Thr43, Ser44, Met50, Gly307, Ile311, and Ser312 together coordinate FAD. The short motif at 339-341 is the Microbody targeting signal element; the sequence is SKL.

The protein belongs to the DAMOX/DASOX family. Dimer or tetramer. Interacts with PEX5; the interaction is direct and required for localization of DDO to the peroxisome. Requires FAD as cofactor. As to expression, expressed in the small intestine (at protein level). Expressed in the ependymal cell layer of the telencephalic ventricles, hippocampus, thalamus, cerebellum, midbrain region, pons, olfactory bulbs, and cortex. Repressed in the testis. Expressed in the kidney, liver, stomach, pancreas, uterus, lactating breast, involuting mammary gland, brain, heart, lung, and skin. In terms of tissue distribution, expressed in kidney, liver, pancreas, and in the mammary gland regardless of lactation status.

It is found in the peroxisome matrix. The protein resides in the cytoplasm. The protein localises to the cytosol. It carries out the reaction D-aspartate + O2 + H2O = oxaloacetate + H2O2 + NH4(+). The enzyme catalyses D-glutamate + O2 + H2O = H2O2 + 2-oxoglutarate + NH4(+). With respect to regulation, inhibited by the benzodiazepine olanzapine; chronic systemic administration of the benzodiazepine increases levels of D-aspartate and L-glutamate in the prefrontal cortex. Efficiently inhibited by 5-aminonicotinic acid (5-AN) and 1,4-Dihydropyrido[2,3-b]pyrazine-2,3-dione (DPPD). Inhibited by aminooxyacetic acid, thiolactomycin, anthranilic acid, malonate, meso-tartrate and L-tartrate. Benzoate has no effect on activity. Selectively catalyzes the oxidative deamination of acidic amino acids. Suppresses the level of D-aspartate in the brain, an amino acid that can act as an agonist for glutamate receptors. Protects the organism from the toxicity of D-amino acids. May also function in the intestine. In terms of biological role, selectively catalyzes the oxidative deamination of acidic amino acids. Functionally, does not exhibit D-aspartate oxidase activity. The polypeptide is D-aspartate oxidase (Ddo) (Mus musculus (Mouse)).